A 158-amino-acid chain; its full sequence is Cyclic pyranopterin monophosphate synthase (158 aa).

Substrate-binding positions include 75-77 and 113-114; these read LCH and ME. Residue Asp-128 is part of the active site.

It belongs to the MoaC family. As to quaternary structure, homohexamer; trimer of dimers.

It carries out the reaction (8S)-3',8-cyclo-7,8-dihydroguanosine 5'-triphosphate = cyclic pyranopterin phosphate + diphosphate. The protein operates within cofactor biosynthesis; molybdopterin biosynthesis. In terms of biological role, catalyzes the conversion of (8S)-3',8-cyclo-7,8-dihydroguanosine 5'-triphosphate to cyclic pyranopterin monophosphate (cPMP). The chain is Cyclic pyranopterin monophosphate synthase from Roseiflexus sp. (strain RS-1).